The following is a 458-amino-acid chain: NADH-quinone oxidoreductase subunit N (458 aa).

Transmembrane regions (helical) follow at residues 3 to 23 (QYLFLLPEITLFILSCLLLFL), 29 to 49 (FGLIAVLITLAATFFSQTCTS), 64 to 84 (QNVKLVILAFTCVFFIQAIAV), 92 to 112 (FSVLVLLSLLGMLLSVSSSTL), 147 to 167 (TLLGTFMSAVMIYGISLIFVV), 188 to 208 (ILLFISGLMFKVAAAPFHAWI), 222 to 242 (FFAVLPKLSLIVVLVSLISNL), 265 to 285 (NILFTSGILSIAFGTFSAFGQ), 291 to 311 (FIGFASIAHVGYMLLGVSNSA), 320 to 340 (IAYALVYSFTNLGILSVVLML), 358 to 378 (VALAFVLLLFSSAGVPPFIGF), 394 to 414 (IPTAIFSMLAGVISAFYYARI), and 437 to 457 (LLTSIVVLCALFSTFGFVLLI).

This sequence belongs to the complex I subunit 2 family. As to quaternary structure, NDH-1 is composed of 14 different subunits. Subunits NuoA, H, J, K, L, M, N constitute the membrane sector of the complex.

Its subcellular location is the cell inner membrane. The enzyme catalyses a quinone + NADH + 5 H(+)(in) = a quinol + NAD(+) + 4 H(+)(out). Its function is as follows. NDH-1 shuttles electrons from NADH, via FMN and iron-sulfur (Fe-S) centers, to quinones in the respiratory chain. The immediate electron acceptor for the enzyme in this species is believed to be ubiquinone. Couples the redox reaction to proton translocation (for every two electrons transferred, four hydrogen ions are translocated across the cytoplasmic membrane), and thus conserves the redox energy in a proton gradient. In Neorickettsia risticii (strain Illinois), this protein is NADH-quinone oxidoreductase subunit N.